Consider the following 601-residue polypeptide: Replication protein A 70 kDa DNA-binding subunit (601 aa).

Residues 107-172 (MPGKIGDPTP…NTPGGSSKVV (66 aa)) form a disordered region. Positions 124-135 (APSTAPAPTARP) are enriched in low complexity. Over residues 137-153 (QPQNGSDGSTYRPSAQS) the composition is skewed to polar residues. Residues 184-268 (WTIRARVTNK…LKNDYEMTLN (85 aa)) constitute a DNA-binding region (OB). Position 370 is a phosphoserine (Ser370). The segment at 466–488 (CPSKDCNKKVVDQQNGMFRCEKC) adopts a C4-type zinc-finger fold.

The protein belongs to the replication factor A protein 1 family. In terms of assembly, component of the heterotrimeric canonical replication protein A complex (RPA).

It localises to the nucleus. Its subcellular location is the PML body. Functionally, as part of the heterotrimeric replication protein A complex (RPA/RP-A), binds and stabilizes single-stranded DNA intermediates, that form during DNA replication or upon DNA stress. It prevents their reannealing and in parallel, recruits and activates different proteins and complexes involved in DNA metabolism. Thereby, it plays an essential role both in DNA replication and the cellular response to DNA damage. The protein is Replication protein A 70 kDa DNA-binding subunit (rpa1) of Danio rerio (Zebrafish).